The primary structure comprises 399 residues: Probable 2,3-bisphosphoglycerate-independent phosphoglycerate mutase (399 aa).

The protein belongs to the BPG-independent phosphoglycerate mutase family. A-PGAM subfamily.

It carries out the reaction (2R)-2-phosphoglycerate = (2R)-3-phosphoglycerate. The protein operates within carbohydrate degradation; glycolysis; pyruvate from D-glyceraldehyde 3-phosphate: step 3/5. Catalyzes the interconversion of 2-phosphoglycerate and 3-phosphoglycerate. The polypeptide is Probable 2,3-bisphosphoglycerate-independent phosphoglycerate mutase (Geobacter sulfurreducens (strain ATCC 51573 / DSM 12127 / PCA)).